A 342-amino-acid chain; its full sequence is Biotin synthase (342 aa).

Residues 38–262 (GQVQISTLLS…MMPTSYVRLS (225 aa)) enclose the Radical SAM core domain. [4Fe-4S] cluster is bound by residues cysteine 53, cysteine 57, and cysteine 60. Residues cysteine 97, cysteine 128, cysteine 188, and arginine 260 each contribute to the [2Fe-2S] cluster site.

It belongs to the radical SAM superfamily. Biotin synthase family. As to quaternary structure, homodimer. [4Fe-4S] cluster is required as a cofactor. It depends on [2Fe-2S] cluster as a cofactor.

The enzyme catalyses (4R,5S)-dethiobiotin + (sulfur carrier)-SH + 2 reduced [2Fe-2S]-[ferredoxin] + 2 S-adenosyl-L-methionine = (sulfur carrier)-H + biotin + 2 5'-deoxyadenosine + 2 L-methionine + 2 oxidized [2Fe-2S]-[ferredoxin]. It participates in cofactor biosynthesis; biotin biosynthesis; biotin from 7,8-diaminononanoate: step 2/2. In terms of biological role, catalyzes the conversion of dethiobiotin (DTB) to biotin by the insertion of a sulfur atom into dethiobiotin via a radical-based mechanism. This chain is Biotin synthase, found in Baumannia cicadellinicola subsp. Homalodisca coagulata.